Reading from the N-terminus, the 260-residue chain is Triosephosphate isomerase (260 aa).

11 to 13 is a substrate binding site; it reads NWK. The Electrophile role is filled by H103. The active-site Proton acceptor is the E175. Substrate-binding positions include G181, S220, and 241–242; that span reads GG.

Belongs to the triosephosphate isomerase family. Homodimer.

Its subcellular location is the cytoplasm. It carries out the reaction D-glyceraldehyde 3-phosphate = dihydroxyacetone phosphate. It functions in the pathway carbohydrate biosynthesis; gluconeogenesis. Its pathway is carbohydrate degradation; glycolysis; D-glyceraldehyde 3-phosphate from glycerone phosphate: step 1/1. Its function is as follows. Involved in the gluconeogenesis. Catalyzes stereospecifically the conversion of dihydroxyacetone phosphate (DHAP) to D-glyceraldehyde-3-phosphate (G3P). This chain is Triosephosphate isomerase, found in Shewanella sediminis (strain HAW-EB3).